A 213-amino-acid chain; its full sequence is Endonuclease III (213 aa).

The region spanning 101–120 (LEELLKLPGVGRKTANIVLW) is the HhH domain. [4Fe-4S] cluster contacts are provided by Cys180, Cys187, Cys190, and Cys196.

This sequence belongs to the Nth/MutY family. [4Fe-4S] cluster is required as a cofactor.

The catalysed reaction is 2'-deoxyribonucleotide-(2'-deoxyribose 5'-phosphate)-2'-deoxyribonucleotide-DNA = a 3'-end 2'-deoxyribonucleotide-(2,3-dehydro-2,3-deoxyribose 5'-phosphate)-DNA + a 5'-end 5'-phospho-2'-deoxyribonucleoside-DNA + H(+). Functionally, DNA repair enzyme that has both DNA N-glycosylase activity and AP-lyase activity. The DNA N-glycosylase activity releases various damaged pyrimidines from DNA by cleaving the N-glycosidic bond, leaving an AP (apurinic/apyrimidinic) site. The AP-lyase activity cleaves the phosphodiester bond 3' to the AP site by a beta-elimination, leaving a 3'-terminal unsaturated sugar and a product with a terminal 5'-phosphate. The chain is Endonuclease III from Thermotoga maritima (strain ATCC 43589 / DSM 3109 / JCM 10099 / NBRC 100826 / MSB8).